Consider the following 328-residue polypeptide: Bidirectional sugar transporter SWEET16 (328 aa).

Residues 1-5 are Extracellular-facing; it reads MADPS. The helical transmembrane segment at 6-26 threads the bilayer; the sequence is FFVGIVGNVISILVFASPIAT. The 87-residue stretch at 6 to 92 folds into the MtN3/slv 1 domain; the sequence is FFVGIVGNVI…TLYLAYAPRE (87 aa). The Cytoplasmic segment spans residues 27-38; it reads FRRIVRSKSTEE. The helical transmembrane segment at 39-56 threads the bilayer; that stretch reads FRWLPYVTTLLSTSLWTF. Residues 57–63 are Extracellular-facing; that stretch reads YGLHKPG. The chain crosses the membrane as a helical span at residues 64–84; the sequence is GLLIVTVNGSGAALEAIYVTL. The Cytoplasmic segment spans residues 85 to 99; the sequence is YLAYAPRETKAKMVK. A helical membrane pass occupies residues 100–120; the sequence is VVLAVNVGALAAVVAVALVAL. The Extracellular portion of the chain corresponds to 121 to 125; the sequence is HGGVR. Residues 126-146 form a helical membrane-spanning segment; that stretch reads LFVVGVLCAALTIGMYAAPMA. Residues 127–213 form the MtN3/slv 2 domain; it reads FVVGVLCAAL…LYMAYRRTKK (87 aa). The Cytoplasmic segment spans residues 147-161; that stretch reads AMRTVVKTRSVEYMP. The helical transmembrane segment at 162–182 threads the bilayer; sequence FSLSFFLFLNGGVWSVYSLLV. Residues 183-185 are Extracellular-facing; it reads KDY. Residues 186–206 traverse the membrane as a helical segment; that stretch reads FIGIPNAIGFALGTAQLALYM. At 207–328 the chain is on the cytoplasmic side; the sequence is AYRRTKKPAG…ATTAGPGDRH (122 aa). Residues 288–299 show a composition bias toward basic residues; the sequence is HQHHGGHHHHHR. The disordered stretch occupies residues 288–328; that stretch reads HQHHGGHHHHHRFDTVPDDDDEAVAAGGTTPATTAGPGDRH. A compositionally biased stretch (low complexity) spans 312-328; that stretch reads AAGGTTPATTAGPGDRH.

This sequence belongs to the SWEET sugar transporter family. Forms homooligomers and/or heterooligomers.

The protein localises to the cell membrane. Its function is as follows. Mediates both low-affinity uptake and efflux of sugar across the plasma membrane. This chain is Bidirectional sugar transporter SWEET16 (SWEET16), found in Oryza sativa subsp. japonica (Rice).